A 141-amino-acid polypeptide reads, in one-letter code: Nucleoside diphosphate kinase (141 aa).

ATP-binding residues include Lys9, Phe57, Arg85, Thr91, Arg102, and Asn112. The Pros-phosphohistidine intermediate role is filled by His115.

The protein belongs to the NDK family. Homotetramer. Requires Mg(2+) as cofactor.

The protein resides in the cytoplasm. The enzyme catalyses a 2'-deoxyribonucleoside 5'-diphosphate + ATP = a 2'-deoxyribonucleoside 5'-triphosphate + ADP. It catalyses the reaction a ribonucleoside 5'-diphosphate + ATP = a ribonucleoside 5'-triphosphate + ADP. Major role in the synthesis of nucleoside triphosphates other than ATP. The ATP gamma phosphate is transferred to the NDP beta phosphate via a ping-pong mechanism, using a phosphorylated active-site intermediate. The sequence is that of Nucleoside diphosphate kinase from Prosthecochloris aestuarii (strain DSM 271 / SK 413).